We begin with the raw amino-acid sequence, 52 residues long: Light-harvesting protein B-870 alpha chain (52 aa).

Over 1–15 (MAKFYKIWLIFDPRR) the chain is Cytoplasmic. A helical transmembrane segment spans residues 16 to 36 (VFVAQGVFLFLLAAMIHLVVL). Histidine 32 provides a ligand contact to a bacteriochlorophyll. Residues 37 to 52 (SSGLNWFEAAAAVGGQ) lie on the Periplasmic side of the membrane.

This sequence belongs to the antenna complex alpha subunit family. In terms of assembly, the core complex is formed by different alpha and beta chains, binding bacteriochlorophyll molecules, and arranged most probably in tetrameric structures disposed around the reaction center. The non-pigmented gamma chains may constitute additional components.

Its subcellular location is the cell inner membrane. In terms of biological role, antenna complexes are light-harvesting systems, which transfer the excitation energy to the reaction centers. This is Light-harvesting protein B-870 alpha chain (pufA) from Roseobacter denitrificans (strain ATCC 33942 / OCh 114) (Erythrobacter sp. (strain OCh 114)).